The sequence spans 736 residues: Phosphoribosylformylglycinamidine synthase subunit PurL (736 aa).

His-50 is an active-site residue. Residues Tyr-53 and Lys-92 each coordinate ATP. Residue Glu-94 coordinates Mg(2+). Substrate is bound by residues 95 to 98 (SHNH) and Arg-117. Catalysis depends on His-96, which acts as the Proton acceptor. Asp-118 contributes to the Mg(2+) binding site. Residue Gln-241 participates in substrate binding. Position 269 (Asp-269) interacts with Mg(2+). Position 313 to 315 (313 to 315 (ESQ)) interacts with substrate. ATP is bound by residues Asp-495 and Gly-532. Residue Asn-533 coordinates Mg(2+). Position 535 (Ser-535) interacts with substrate.

It belongs to the FGAMS family. Monomer. Part of the FGAM synthase complex composed of 1 PurL, 1 PurQ and 2 PurS subunits.

It localises to the cytoplasm. The enzyme catalyses N(2)-formyl-N(1)-(5-phospho-beta-D-ribosyl)glycinamide + L-glutamine + ATP + H2O = 2-formamido-N(1)-(5-O-phospho-beta-D-ribosyl)acetamidine + L-glutamate + ADP + phosphate + H(+). It functions in the pathway purine metabolism; IMP biosynthesis via de novo pathway; 5-amino-1-(5-phospho-D-ribosyl)imidazole from N(2)-formyl-N(1)-(5-phospho-D-ribosyl)glycinamide: step 1/2. Its function is as follows. Part of the phosphoribosylformylglycinamidine synthase complex involved in the purines biosynthetic pathway. Catalyzes the ATP-dependent conversion of formylglycinamide ribonucleotide (FGAR) and glutamine to yield formylglycinamidine ribonucleotide (FGAM) and glutamate. The FGAM synthase complex is composed of three subunits. PurQ produces an ammonia molecule by converting glutamine to glutamate. PurL transfers the ammonia molecule to FGAR to form FGAM in an ATP-dependent manner. PurS interacts with PurQ and PurL and is thought to assist in the transfer of the ammonia molecule from PurQ to PurL. This is Phosphoribosylformylglycinamidine synthase subunit PurL from Bartonella tribocorum (strain CIP 105476 / IBS 506).